We begin with the raw amino-acid sequence, 71 residues long: Protein SlyX homolog (71 aa).

It belongs to the SlyX family.

The chain is Protein SlyX homolog from Stutzerimonas stutzeri (strain A1501) (Pseudomonas stutzeri).